We begin with the raw amino-acid sequence, 169 residues long: Adenine phosphoribosyltransferase (169 aa).

The protein belongs to the purine/pyrimidine phosphoribosyltransferase family. Homodimer.

Its subcellular location is the cytoplasm. It catalyses the reaction AMP + diphosphate = 5-phospho-alpha-D-ribose 1-diphosphate + adenine. It participates in purine metabolism; AMP biosynthesis via salvage pathway; AMP from adenine: step 1/1. Catalyzes a salvage reaction resulting in the formation of AMP, that is energically less costly than de novo synthesis. This Mycoplasmopsis synoviae (strain 53) (Mycoplasma synoviae) protein is Adenine phosphoribosyltransferase.